The sequence spans 981 residues: Protein deadlock (981 aa).

The segment at 1–60 (MEKLDKIRMSQKLSCWQHILTTLGTSSKTEQEWNTFFKGFLESWRKPYCIQTSCDPSIPL) is required for interaction with rhi/rhino. Disordered regions lie at residues 72-195 (LQEN…ACAP), 274-307 (IMDK…DDQL), 327-352 (SRNE…NKKE), 375-446 (LRKS…PNNI), 554-586 (GLDD…ETLK), and 642-662 (LVHQ…TAAR). 2 stretches are compositionally biased toward polar residues: residues 104 to 113 (PSKSHSTGST) and 150 to 160 (NHTTSIFSKAQ). Basic and acidic residues predominate over residues 167–191 (KLSSTKKRPDTCAPTDDSRKNREPR). Residues 337-352 (EKVKLKGERPAQNKKE) show a composition bias toward basic and acidic residues. Positions 377–390 (KSVKKSAKQQKPRV) are enriched in basic residues. The segment covering 409-419 (TQDKQSTHEMI) has biased composition (basic and acidic residues). Over residues 422–446 (QAKTISEASGQQTSQVQSSLSPNNI) the composition is skewed to polar residues. Residues 652–662 (RNQRDEATAAR) show a composition bias toward basic and acidic residues.

Component of the Rhino-Deadlock-Cutoff (RDC) complex, composed of rhi/rhino, del/deadlock and cuff/cutoff. Interacts (via N-terminus) with rhi/rhino (via C-terminus); this interaction is direct. Interacts (via C-terminus) with cuff/cutoff; this interaction is direct.

It localises to the nucleus. It is found in the cytoplasm. The protein resides in the cytoskeleton. Its subcellular location is the microtubule organizing center. The protein localises to the centrosome. It localises to the chromosome. Functionally, developmental protein involved in oogenesis. Required for germline maintenance, stability of mitotic spindles, localization of patterning determinants, oocyte growth and fusome biogenesis in males and females. Also required for dorso-ventral and antero-posterior patterning of oocyte and eggshell. May be involved in microtubule function during oogenesis. Part of a rhi-dependent transcription machinery that enables the generation of piRNA precursors from heterochromatin while maintaining the suppression of transposon-encoded promoters and enhancers. Component of the RDC complex (rhi, del and cuff) which binds to repressive H3K9me3 marks in the piRNA clusters. RDC promotes the bidirectional transcription of piRNA clusters at these sites by interacting with Moonshiner which forms a complex with the transcription initiation factors TfIIA-S and Trf2. This mechanism allows transcription to occur in piRNA clusters despite the lack of proper promoter elements and in the presence of the repressive H3K9me3 mark. As part of the RDC complex, involved in suppression of splicing. In Drosophila melanogaster (Fruit fly), this protein is Protein deadlock (del).